The sequence spans 223 residues: UPF0441 protein YgiB (223 aa).

Positions 178–195 are enriched in low complexity; sequence TVPKTAMAPKPATTTTVT. The segment at 178 to 223 is disordered; sequence TVPKTAMAPKPATTTTVTRGGFGESVAKQSTMQRGATGTSSRSMGG. A compositionally biased stretch (polar residues) spans 204 to 223; the sequence is AKQSTMQRGATGTSSRSMGG.

This sequence belongs to the UPF0441 family.

This chain is UPF0441 protein YgiB, found in Escherichia coli O6:K15:H31 (strain 536 / UPEC).